The following is a 312-amino-acid chain: Porphobilinogen deaminase (312 aa).

Cysteine 241 is subject to S-(dipyrrolylmethanemethyl)cysteine.

This sequence belongs to the HMBS family. In terms of assembly, monomer. Dipyrromethane is required as a cofactor.

It catalyses the reaction 4 porphobilinogen + H2O = hydroxymethylbilane + 4 NH4(+). It functions in the pathway porphyrin-containing compound metabolism; protoporphyrin-IX biosynthesis; coproporphyrinogen-III from 5-aminolevulinate: step 2/4. Its pathway is porphyrin-containing compound metabolism; chlorophyll biosynthesis. Its function is as follows. Tetrapolymerization of the monopyrrole PBG into the hydroxymethylbilane pre-uroporphyrinogen in several discrete steps. This is Porphobilinogen deaminase (hemC) from Chlorobaculum parvum (strain DSM 263 / NCIMB 8327) (Chlorobium vibrioforme subsp. thiosulfatophilum).